Here is an 843-residue protein sequence, read N- to C-terminus: Protein P (843 aa).

Residues 1–177 (MPLSYQHFRK…FCGSPYSWEQ (177 aa)) form a terminal protein domain (TP) region. The interval 178-346 (DLQHGRLVIQ…YCLCHIVNLI (169 aa)) is spacer. Disordered stretches follow at residues 219–258 (RKSR…VGVE) and 297–316 (SSGH…RSQS). The polymerase/reverse transcriptase domain (RT) stretch occupies residues 347–690 (DDWGPCAEHG…YLNLYPVARQ (344 aa)). Residues 357 to 600 (EHRIRTPRTP…YSLNFMGYVI (244 aa)) enclose the Reverse transcriptase domain. Residues Asp429, Asp551, and Asp552 each contribute to the Mg(2+) site.

This sequence belongs to the hepadnaviridae P protein family.

It carries out the reaction DNA(n) + a 2'-deoxyribonucleoside 5'-triphosphate = DNA(n+1) + diphosphate. The catalysed reaction is Endonucleolytic cleavage to 5'-phosphomonoester.. Activated by host HSP70 and HSP40 in vitro to be able to bind the epsilon loop of the pgRNA. Because deletion of the RNase H region renders the protein partly chaperone-independent, the chaperones may be needed indirectly to relieve occlusion of the RNA-binding site by this domain. Inhibited by several reverse-transcriptase inhibitors: Lamivudine, Adefovir and Entecavir. Multifunctional enzyme that converts the viral RNA genome into dsDNA in viral cytoplasmic capsids. This enzyme displays a DNA polymerase activity that can copy either DNA or RNA templates, and a ribonuclease H (RNase H) activity that cleaves the RNA strand of RNA-DNA heteroduplexes in a partially processive 3'- to 5'-endonucleasic mode. Neo-synthesized pregenomic RNA (pgRNA) are encapsidated together with the P protein, and reverse-transcribed inside the nucleocapsid. Initiation of reverse-transcription occurs first by binding the epsilon loop on the pgRNA genome, and is initiated by protein priming, thereby the 5'-end of (-)DNA is covalently linked to P protein. Partial (+)DNA is synthesized from the (-)DNA template and generates the relaxed circular DNA (RC-DNA) genome. After budding and infection, the RC-DNA migrates in the nucleus, and is converted into a plasmid-like covalently closed circular DNA (cccDNA). The activity of P protein does not seem to be necessary for cccDNA generation, and is presumably released from (+)DNA by host nuclear DNA repair machinery. The sequence is that of Protein P from Hepatitis B virus genotype B1 (isolate Japan/Ry30/2002) (HBV-B).